A 453-amino-acid chain; its full sequence is DNA repair protein RadA (453 aa).

The segment at 10 to 27 (CQECGYQSPKYLGRCPNC) adopts a C4-type zinc-finger fold. 95-102 (GDPGIGKS) is an ATP binding site. The RadA KNRFG motif motif lies at 251–255 (KNRFG). The segment at 350 to 453 (DAYLKSAGGV…VGQVLNAVFS (104 aa)) is lon-protease-like.

Belongs to the RecA family. RadA subfamily.

Functionally, DNA-dependent ATPase involved in processing of recombination intermediates, plays a role in repairing DNA breaks. Stimulates the branch migration of RecA-mediated strand transfer reactions, allowing the 3' invading strand to extend heteroduplex DNA faster. Binds ssDNA in the presence of ADP but not other nucleotides, has ATPase activity that is stimulated by ssDNA and various branched DNA structures, but inhibited by SSB. Does not have RecA's homology-searching function. This chain is DNA repair protein RadA, found in Streptococcus pyogenes serotype M1.